Reading from the N-terminus, the 310-residue chain is Sporozoite surface protein P36 (310 aa).

A signal peptide spans 1-24 (MRKALYSLLFYMCICLYIYTPVFM). 6-Cys domains lie at 25–157 (ANLK…IKKT) and 168–309 (YIKG…STKA). 6 disulfides stabilise this stretch: Cys-38–Cys-48, Cys-62–Cys-137, Cys-80–Cys-135, Cys-172–Cys-196, Cys-210–Cys-291, and Cys-227–Cys-289. Residues Asn-72, Asn-114, and Asn-118 are each glycosylated (N-linked (GlcNAc...) asparagine). N-linked (GlcNAc...) asparagine glycosylation is present at Asn-290.

It localises to the cell surface. Its subcellular location is the cell membrane. Its function is as follows. Involved in sporozoite infection of hepatocytes and replication therein. This is Sporozoite surface protein P36 (P36) from Plasmodium yoelii yoelii.